Consider the following 351-residue polypeptide: S-adenosylmethionine:tRNA ribosyltransferase-isomerase (351 aa).

The protein belongs to the QueA family. In terms of assembly, monomer.

Its subcellular location is the cytoplasm. It carries out the reaction 7-aminomethyl-7-carbaguanosine(34) in tRNA + S-adenosyl-L-methionine = epoxyqueuosine(34) in tRNA + adenine + L-methionine + 2 H(+). It participates in tRNA modification; tRNA-queuosine biosynthesis. In terms of biological role, transfers and isomerizes the ribose moiety from AdoMet to the 7-aminomethyl group of 7-deazaguanine (preQ1-tRNA) to give epoxyqueuosine (oQ-tRNA). The sequence is that of S-adenosylmethionine:tRNA ribosyltransferase-isomerase from Sphingopyxis alaskensis (strain DSM 13593 / LMG 18877 / RB2256) (Sphingomonas alaskensis).